Reading from the N-terminus, the 419-residue chain is UDP-N-acetylglucosamine 1-carboxyvinyltransferase (419 aa).

22-23 contacts phosphoenolpyruvate; it reads KN. Arginine 93 is a UDP-N-acetyl-alpha-D-glucosamine binding site. Cysteine 117 serves as the catalytic Proton donor. A 2-(S-cysteinyl)pyruvic acid O-phosphothioketal modification is found at cysteine 117. UDP-N-acetyl-alpha-D-glucosamine-binding positions include 122–126, aspartate 308, and isoleucine 330; that span reads RPVDL.

It belongs to the EPSP synthase family. MurA subfamily.

Its subcellular location is the cytoplasm. The enzyme catalyses phosphoenolpyruvate + UDP-N-acetyl-alpha-D-glucosamine = UDP-N-acetyl-3-O-(1-carboxyvinyl)-alpha-D-glucosamine + phosphate. The protein operates within cell wall biogenesis; peptidoglycan biosynthesis. Cell wall formation. Adds enolpyruvyl to UDP-N-acetylglucosamine. The protein is UDP-N-acetylglucosamine 1-carboxyvinyltransferase of Pseudomonas putida (Arthrobacter siderocapsulatus).